The chain runs to 318 residues: L-malyl-CoA/beta-methylmalyl-CoA lyase (318 aa).

Residues F19, R24, K30, and R76 each coordinate substrate. Positions 141 and 168 each coordinate Mg(2+). Substrate-binding positions include 167–168 (AD) and 251–252 (IH).

This sequence belongs to the HpcH/HpaI aldolase family. Homohexamer. Dimer of trimers. Mg(2+) is required as a cofactor. Requires Mn(2+) as cofactor.

The catalysed reaction is (S)-malyl-CoA = glyoxylate + acetyl-CoA. It carries out the reaction (2R,3S)-beta-methylmalyl-CoA = propanoyl-CoA + glyoxylate. Involved in the ethylmalonyl-CoA pathway for acetate assimilation. Catalyzes the reversible condensation of glyoxylate and acetyl-CoA to L-malyl-CoA and the reversible condensation of glyoxylate and propionyl-CoA to yield beta-methylmalyl-CoA. This is L-malyl-CoA/beta-methylmalyl-CoA lyase from Cereibacter sphaeroides (strain ATCC 17025 / ATH 2.4.3) (Rhodobacter sphaeroides).